A 157-amino-acid chain; its full sequence is Protein Smg (157 aa).

The protein belongs to the Smg family.

The chain is Protein Smg from Buchnera aphidicola subsp. Schizaphis graminum (strain Sg).